The sequence spans 121 residues: Large ribosomal subunit protein bL12 (121 aa).

The protein belongs to the bacterial ribosomal protein bL12 family. Homodimer. Part of the ribosomal stalk of the 50S ribosomal subunit. Forms a multimeric L10(L12)X complex, where L10 forms an elongated spine to which 2 to 4 L12 dimers bind in a sequential fashion. Binds GTP-bound translation factors.

Forms part of the ribosomal stalk which helps the ribosome interact with GTP-bound translation factors. Is thus essential for accurate translation. The polypeptide is Large ribosomal subunit protein bL12 (Tolumonas auensis (strain DSM 9187 / NBRC 110442 / TA 4)).